We begin with the raw amino-acid sequence, 140 residues long: Thymic stromal lymphopoietin (140 aa).

A signal peptide spans 1–19 (MVLLRSLFILQVLVRMGLT). 2 N-linked (GlcNAc...) asparagine glycosylation sites follow: N21 and N26. Intrachain disulfides connect C25–C98, C57–C63, and C78–C121. N123 carries an N-linked (GlcNAc...) asparagine glycan.

Interacts with a receptor composed of CRLF2 and IL7R. Binding of TSLP to CRLF2/TSLPR is a mechanistic prerequisite for recruitment of IL7R to the high-affinity ternary complex.

It localises to the secreted. In terms of biological role, cytokine that induces the release of T-cell-attracting chemokines from monocytes and, in particular, enhances the maturation of CD11c(+) dendritic cells. Can induce allergic inflammation by directly activating mast cells. The protein is Thymic stromal lymphopoietin (Tslp) of Mus musculus (Mouse).